A 234-amino-acid chain; its full sequence is Phosphoribosylformylglycinamidine synthase subunit PurQ (234 aa).

Residues 4–234 (RIGVVTFPGS…TSILKKLVNA (231 aa)) form the Glutamine amidotransferase type-1 domain. Catalysis depends on Cys87, which acts as the Nucleophile. Residues His204 and Glu206 contribute to the active site.

Part of the FGAM synthase complex composed of 1 PurL, 1 PurQ and 2 PurS subunits.

It is found in the cytoplasm. The catalysed reaction is N(2)-formyl-N(1)-(5-phospho-beta-D-ribosyl)glycinamide + L-glutamine + ATP + H2O = 2-formamido-N(1)-(5-O-phospho-beta-D-ribosyl)acetamidine + L-glutamate + ADP + phosphate + H(+). It catalyses the reaction L-glutamine + H2O = L-glutamate + NH4(+). It participates in purine metabolism; IMP biosynthesis via de novo pathway; 5-amino-1-(5-phospho-D-ribosyl)imidazole from N(2)-formyl-N(1)-(5-phospho-D-ribosyl)glycinamide: step 1/2. Part of the phosphoribosylformylglycinamidine synthase complex involved in the purines biosynthetic pathway. Catalyzes the ATP-dependent conversion of formylglycinamide ribonucleotide (FGAR) and glutamine to yield formylglycinamidine ribonucleotide (FGAM) and glutamate. The FGAM synthase complex is composed of three subunits. PurQ produces an ammonia molecule by converting glutamine to glutamate. PurL transfers the ammonia molecule to FGAR to form FGAM in an ATP-dependent manner. PurS interacts with PurQ and PurL and is thought to assist in the transfer of the ammonia molecule from PurQ to PurL. In Streptomyces avermitilis (strain ATCC 31267 / DSM 46492 / JCM 5070 / NBRC 14893 / NCIMB 12804 / NRRL 8165 / MA-4680), this protein is Phosphoribosylformylglycinamidine synthase subunit PurQ.